The primary structure comprises 211 residues: CASP-like protein 1B1 (211 aa).

Residues 1–29 (MDLERGSKTPPSSAPAAAAATTTTSTCCS) are disordered. Residues 1-55 (MDLERGSKTPPSSAPAAAAATTTTSTCCSNKRPQLRDRLVALQPVVLRAAATLAT) are Cytoplasmic-facing. Residues 9 to 26 (TPPSSAPAAAAATTTTST) show a composition bias toward low complexity. A helical membrane pass occupies residues 56–76 (AVAAAVMALNAQSYTAVVAIV). At 77–94 (GTRPLTQTFTTKFRDTPA) the chain is on the extracellular side. A helical membrane pass occupies residues 95–115 (FVYFVIANAIAAVYNLVMLLF). The Cytoplasmic segment spans residues 116–123 (RCLILRRR). The helical transmembrane segment at 124 to 144 (MAGLVVHMLDMVIMALLATGA) threads the bilayer. The Extracellular segment spans residues 145–176 (ATAAAMAELGKNGNVHARWNPICDRFGSFCSR). Residues 177 to 197 (GGVALASSFTGVALMLALNLL) traverse the membrane as a helical segment. Topologically, residues 198 to 211 (SAASNAQCSPGQYE) are cytoplasmic.

The protein belongs to the Casparian strip membrane proteins (CASP) family. Homodimer and heterodimers.

It is found in the cell membrane. This Sorghum bicolor (Sorghum) protein is CASP-like protein 1B1.